A 290-amino-acid polypeptide reads, in one-letter code: Light-independent protochlorophyllide reductase iron-sulfur ATP-binding protein (290 aa).

Residues 10–15 (GIGKST) and lysine 39 each bind ATP. Serine 14 is a Mg(2+) binding site. [4Fe-4S] cluster-binding residues include cysteine 95 and cysteine 129. 180–181 (NR) contacts ATP.

This sequence belongs to the NifH/BchL/ChlL family. Homodimer. Protochlorophyllide reductase is composed of three subunits; ChlL, ChlN and ChlB. [4Fe-4S] cluster is required as a cofactor.

It localises to the plastid. The protein resides in the chloroplast. The catalysed reaction is chlorophyllide a + oxidized 2[4Fe-4S]-[ferredoxin] + 2 ADP + 2 phosphate = protochlorophyllide a + reduced 2[4Fe-4S]-[ferredoxin] + 2 ATP + 2 H2O. The protein operates within porphyrin-containing compound metabolism; chlorophyll biosynthesis (light-independent). In terms of biological role, component of the dark-operative protochlorophyllide reductase (DPOR) that uses Mg-ATP and reduced ferredoxin to reduce ring D of protochlorophyllide (Pchlide) to form chlorophyllide a (Chlide). This reaction is light-independent. The L component serves as a unique electron donor to the NB-component of the complex, and binds Mg-ATP. The protein is Light-independent protochlorophyllide reductase iron-sulfur ATP-binding protein of Cycas taitungensis (Prince sago).